Here is a 343-residue protein sequence, read N- to C-terminus: HTH-type transcriptional regulator GntR (343 aa).

The 55-residue stretch at Pro16–Ser70 folds into the HTH lacI-type domain. The segment at residues Leu18–Arg37 is a DNA-binding region (H-T-H motif).

With respect to regulation, free GntR fails to recognize gluconate and 6-phosphogluconate, whereas the GntR/DNA complexes recognize both ligands. It is therefore likely that GntR DNA binding induces structural changes that permit GntR to recognize effectors. Its function is as follows. Involved in the regulation of glucose metabolism. Represses its own expression as well as that of the gluconate permease GntP. It employs an effector mediated de-repression mechanism: in the absence of ligand, GntR binds to the gntR and gntP promoters and represses their expression. The release of promoter bound GntR is induced by gluconate and 6-phosphogluconate that bind with similar apparent affinities to the GntR/DNA complex. The release of GntR leads to transcription of the genes. This is HTH-type transcriptional regulator GntR from Pseudomonas aeruginosa (strain ATCC 15692 / DSM 22644 / CIP 104116 / JCM 14847 / LMG 12228 / 1C / PRS 101 / PAO1).